The sequence spans 176 residues: Interleukin-7 (176 aa).

The N-terminal stretch at Met-1 to Ser-25 is a signal peptide. Intrachain disulfides connect Cys-27–Cys-165, Cys-58–Cys-153, and Cys-71–Cys-116. 3 N-linked (GlcNAc...) asparagine glycosylation sites follow: Asn-94, Asn-115, and Asn-140.

Belongs to the IL-7/IL-9 family.

The protein localises to the secreted. In terms of biological role, hematopoietic growth factor capable of stimulating the proliferation of lymphoid progenitors. It is important for proliferation during certain stages of B-cell maturation. This is Interleukin-7 (IL7) from Sus scrofa (Pig).